A 198-amino-acid chain; its full sequence is Anthranilate synthase component 2 (198 aa).

Positions 2–198 constitute a Glutamine amidotransferase type-1 domain; it reads LLMMIDNYDS…NFLKQTGGRR (197 aa). L-glutamine is bound at residue 53 to 55; the sequence is GPC. Catalysis depends on Cys80, which acts as the Nucleophile; for GATase activity. Residues Gln84 and 130-131 contribute to the L-glutamine site; that span reads SL. Residues His174 and Glu176 each act as for GATase activity in the active site.

As to quaternary structure, heterotetramer consisting of two non-identical subunits: a beta subunit (TrpG) and a large alpha subunit (TrpE).

The catalysed reaction is chorismate + L-glutamine = anthranilate + pyruvate + L-glutamate + H(+). It functions in the pathway amino-acid biosynthesis; L-tryptophan biosynthesis; L-tryptophan from chorismate: step 1/5. In terms of biological role, part of a heterotetrameric complex that catalyzes the two-step biosynthesis of anthranilate, an intermediate in the biosynthesis of L-tryptophan. In the first step, the glutamine-binding beta subunit (TrpG) of anthranilate synthase (AS) provides the glutamine amidotransferase activity which generates ammonia as a substrate that, along with chorismate, is used in the second step, catalyzed by the large alpha subunit of AS (TrpE) to produce anthranilate. In the absence of TrpG, TrpE can synthesize anthranilate directly from chorismate and high concentrations of ammonia. The sequence is that of Anthranilate synthase component 2 (trpG) from Pseudomonas putida (Arthrobacter siderocapsulatus).